The chain runs to 220 residues: NAD(P)H-hydrate epimerase (220 aa).

Positions 6–203 constitute a YjeF N-terminal domain; that stretch reads ARHLTTLATG…SFDLPEALFH (198 aa). 53–57 contacts (6S)-NADPHX; that stretch reads HNGGV. K(+) contacts are provided by Asn-54 and Asp-116. Residues 120 to 126 and Asp-149 contribute to the (6S)-NADPHX site; that span reads GMRLEGP. Thr-152 lines the K(+) pocket.

This sequence belongs to the NnrE/AIBP family. It depends on K(+) as a cofactor.

The enzyme catalyses (6R)-NADHX = (6S)-NADHX. It catalyses the reaction (6R)-NADPHX = (6S)-NADPHX. Functionally, catalyzes the epimerization of the S- and R-forms of NAD(P)HX, a damaged form of NAD(P)H that is a result of enzymatic or heat-dependent hydration. This is a prerequisite for the S-specific NAD(P)H-hydrate dehydratase to allow the repair of both epimers of NAD(P)HX. The protein is NAD(P)H-hydrate epimerase of Truepera radiovictrix (strain DSM 17093 / CIP 108686 / LMG 22925 / RQ-24).